An 842-amino-acid polypeptide reads, in one-letter code: Cation/H(+) antiporter 20 (842 aa).

Helical transmembrane passes span 26–46, 55–75, 86–106, 122–142, 155–175, 193–213, 228–248, 283–303, 320–340, 353–373, 380–400, and 413–433; these read FPLLIVQTALIIAVSRFLAVL, VIAEIVGGILLGPSALGRNMA, MPILESVASIGLLFFLFLVGL, GIAVAGITLPFIAGVGVAFVI, YAEFLVFMGVALSITAFPVLA, MAAAAFNDVAAWILLALAVAL, LVSLWVLLSGAGFVVFMLVVI, FATDLIGIHSIFGAFVFGLTI, FVSGLLLPLYFATSGLKTDVA, LVVVTACAGKIVGTFVVAVMV, ALTLGFLMNTKGLVELIVLNI, and AILVLMALFTTFITTPTVMAI. Residues 585-595 are compositionally biased toward basic and acidic residues; the sequence is DHGHSHHHQDG. A disordered region spans residues 585 to 605; that stretch reads DHGHSHHHQDGGGDGNVPENV.

This sequence belongs to the monovalent cation:proton antiporter 2 (CPA2) transporter (TC 2.A.37) family. CHX (TC 2.A.37.4) subfamily. In terms of tissue distribution, expressed in leaves and stems. Preferentially expressed in guards cells.

It is found in the endomembrane system. Its function is as follows. Operates as a K(+)/H(+) antiporter that maintains K(+) homeostasis in guard cells and could regulate pH. Plays a critical role in osmoregulation through the control of stomates opening. This is Cation/H(+) antiporter 20 (CHX20) from Arabidopsis thaliana (Mouse-ear cress).